We begin with the raw amino-acid sequence, 572 residues long: Probable inactive glycosyltransferase 25 family member 3 (572 aa).

N-linked (GlcNAc...) asparagine glycans are attached at residues Asn52, Asn130, Asn214, and Asn337. The Prevents secretion from ER motif lies at 569 to 572 (RDEL).

The protein belongs to the glycosyltransferase 25 family.

It is found in the endoplasmic reticulum lumen. Probable cell adhesion protein involved in leukocyte transmigration across the blood-brain barrier. Does not express any beta-galactosyltransferase activity in vitro. In Rattus norvegicus (Rat), this protein is Probable inactive glycosyltransferase 25 family member 3 (Cercam).